A 164-amino-acid chain; its full sequence is ATP synthase subunit b 1 (164 aa).

Residues 4–24 (MELAELWVAVAFFVFVGILLY) traverse the membrane as a helical segment.

This sequence belongs to the ATPase B chain family. In terms of assembly, F-type ATPases have 2 components, F(1) - the catalytic core - and F(0) - the membrane proton channel. F(1) has five subunits: alpha(3), beta(3), gamma(1), delta(1), epsilon(1). F(0) has three main subunits: a(1), b(2) and c(10-14). The alpha and beta chains form an alternating ring which encloses part of the gamma chain. F(1) is attached to F(0) by a central stalk formed by the gamma and epsilon chains, while a peripheral stalk is formed by the delta and b chains.

The protein resides in the cell inner membrane. Its function is as follows. F(1)F(0) ATP synthase produces ATP from ADP in the presence of a proton or sodium gradient. F-type ATPases consist of two structural domains, F(1) containing the extramembraneous catalytic core and F(0) containing the membrane proton channel, linked together by a central stalk and a peripheral stalk. During catalysis, ATP synthesis in the catalytic domain of F(1) is coupled via a rotary mechanism of the central stalk subunits to proton translocation. Functionally, component of the F(0) channel, it forms part of the peripheral stalk, linking F(1) to F(0). The protein is ATP synthase subunit b 1 of Azorhizobium caulinodans (strain ATCC 43989 / DSM 5975 / JCM 20966 / LMG 6465 / NBRC 14845 / NCIMB 13405 / ORS 571).